The primary structure comprises 468 residues: ATP synthase subunit beta (468 aa).

Glycine 155–threonine 162 lines the ATP pocket.

Belongs to the ATPase alpha/beta chains family. As to quaternary structure, F-type ATPases have 2 components, CF(1) - the catalytic core - and CF(0) - the membrane proton channel. CF(1) has five subunits: alpha(3), beta(3), gamma(1), delta(1), epsilon(1). CF(0) has three main subunits: a(1), b(2) and c(9-12). The alpha and beta chains form an alternating ring which encloses part of the gamma chain. CF(1) is attached to CF(0) by a central stalk formed by the gamma and epsilon chains, while a peripheral stalk is formed by the delta and b chains.

It is found in the cell membrane. It catalyses the reaction ATP + H2O + 4 H(+)(in) = ADP + phosphate + 5 H(+)(out). Its function is as follows. Produces ATP from ADP in the presence of a proton gradient across the membrane. The catalytic sites are hosted primarily by the beta subunits. This is ATP synthase subunit beta from Streptococcus pyogenes serotype M1.